A 323-amino-acid chain; its full sequence is Arginase, hepatic (323 aa).

Residues histidine 102, aspartate 125, histidine 127, and aspartate 129 each coordinate Mn(2+). Substrate contacts are provided by residues 127–131 (HADIN), 138–140 (SGN), and aspartate 184. Mn(2+) is bound by residues aspartate 233 and aspartate 235. Substrate-binding residues include threonine 247 and glutamate 278.

This sequence belongs to the arginase family. In terms of assembly, homotrimer. Mn(2+) serves as cofactor.

It catalyses the reaction L-arginine + H2O = urea + L-ornithine. The protein operates within nitrogen metabolism; urea cycle; L-ornithine and urea from L-arginine: step 1/1. The chain is Arginase, hepatic from Aquarana catesbeiana (American bullfrog).